Consider the following 256-residue polypeptide: Type III pantothenate kinase (256 aa).

6–13 (DVGNSHIY) serves as a coordination point for ATP. Residues Tyr-99 and 106–109 (GADR) contribute to the substrate site. Residue Asp-108 is the Proton acceptor of the active site. Residue Asp-129 participates in K(+) binding. Thr-132 contributes to the ATP binding site. Residue Thr-184 participates in substrate binding.

It belongs to the type III pantothenate kinase family. As to quaternary structure, homodimer. NH4(+) is required as a cofactor. It depends on K(+) as a cofactor.

The protein resides in the cytoplasm. It catalyses the reaction (R)-pantothenate + ATP = (R)-4'-phosphopantothenate + ADP + H(+). Its pathway is cofactor biosynthesis; coenzyme A biosynthesis; CoA from (R)-pantothenate: step 1/5. In terms of biological role, catalyzes the phosphorylation of pantothenate (Pan), the first step in CoA biosynthesis. The sequence is that of Type III pantothenate kinase from Legionella pneumophila (strain Corby).